Consider the following 359-residue polypeptide: Ornithine cyclodeaminase (359 aa).

Residues Arg53 and Lys77 each contribute to the L-ornithine site. NAD(+) contacts are provided by residues Thr92, Arg120, 147-148, Asp169, Thr209, 232-235, Lys239, and Ser300; these read AQ and VGGD. Arg120 contacts L-ornithine. An L-ornithine-binding site is contributed by Asp235. Asp235 serves as the catalytic Proton donor/acceptor. Val301 lines the L-ornithine pocket.

This sequence belongs to the ornithine cyclodeaminase/mu-crystallin family. NAD(+) is required as a cofactor.

It carries out the reaction L-ornithine = L-proline + NH4(+). The protein operates within amino-acid biosynthesis; L-proline biosynthesis; L-proline from L-ornithine: step 1/1. Catalyzes the conversion of L-ornithine into L-proline with release of ammonia. The polypeptide is Ornithine cyclodeaminase (Brucella melitensis biotype 1 (strain ATCC 23456 / CCUG 17765 / NCTC 10094 / 16M)).